The chain runs to 593 residues: Aspartate--tRNA ligase (593 aa).

Glu180 is an L-aspartate binding site. An aspartate region spans residues 204-207 (QIFK). Arg226 serves as a coordination point for L-aspartate. ATP is bound by residues 226 to 228 (RDE) and Gln235. Position 453 (His453) interacts with L-aspartate. Glu487 provides a ligand contact to ATP. Residue Arg494 coordinates L-aspartate. 539–542 (GLDR) contacts ATP.

It belongs to the class-II aminoacyl-tRNA synthetase family. Type 1 subfamily. As to quaternary structure, homodimer.

The protein localises to the cytoplasm. The enzyme catalyses tRNA(Asp) + L-aspartate + ATP = L-aspartyl-tRNA(Asp) + AMP + diphosphate. Functionally, catalyzes the attachment of L-aspartate to tRNA(Asp) in a two-step reaction: L-aspartate is first activated by ATP to form Asp-AMP and then transferred to the acceptor end of tRNA(Asp). In Clostridium botulinum (strain Loch Maree / Type A3), this protein is Aspartate--tRNA ligase.